The primary structure comprises 61 residues: Large ribosomal subunit protein uL30 (61 aa).

The protein belongs to the universal ribosomal protein uL30 family. As to quaternary structure, part of the 50S ribosomal subunit.

In Frankia casuarinae (strain DSM 45818 / CECT 9043 / HFP020203 / CcI3), this protein is Large ribosomal subunit protein uL30.